Reading from the N-terminus, the 201-residue chain is Holliday junction branch migration complex subunit RuvA (201 aa).

Residues 1–63 (MIAYIKGTLN…EDAQILFGFQ (63 aa)) form a domain I region. Residues 64–142 (NRDEKYLFTK…SVFSITDEQQ (79 aa)) are domain II. The interval 143–149 (KSSVSNV) is flexible linker. The tract at residues 150–201 (NNNEVYSEAMEALKALGYTDKEVKQVLPHLKKDNDALSVDEAIRKALALLAK) is domain III.

Belongs to the RuvA family. Homotetramer. Forms an RuvA(8)-RuvB(12)-Holliday junction (HJ) complex. HJ DNA is sandwiched between 2 RuvA tetramers; dsDNA enters through RuvA and exits via RuvB. An RuvB hexamer assembles on each DNA strand where it exits the tetramer. Each RuvB hexamer is contacted by two RuvA subunits (via domain III) on 2 adjacent RuvB subunits; this complex drives branch migration. In the full resolvosome a probable DNA-RuvA(4)-RuvB(12)-RuvC(2) complex forms which resolves the HJ.

The protein localises to the cytoplasm. Its function is as follows. The RuvA-RuvB-RuvC complex processes Holliday junction (HJ) DNA during genetic recombination and DNA repair, while the RuvA-RuvB complex plays an important role in the rescue of blocked DNA replication forks via replication fork reversal (RFR). RuvA specifically binds to HJ cruciform DNA, conferring on it an open structure. The RuvB hexamer acts as an ATP-dependent pump, pulling dsDNA into and through the RuvAB complex. HJ branch migration allows RuvC to scan DNA until it finds its consensus sequence, where it cleaves and resolves the cruciform DNA. In Oceanobacillus iheyensis (strain DSM 14371 / CIP 107618 / JCM 11309 / KCTC 3954 / HTE831), this protein is Holliday junction branch migration complex subunit RuvA.